A 170-amino-acid chain; its full sequence is Small ribosomal subunit protein eS7 (170 aa).

Belongs to the eukaryotic ribosomal protein eS7 family. In terms of assembly, component of the small ribosomal subunit.

The protein resides in the cytoplasm. The sequence is that of Small ribosomal subunit protein eS7 (RPS7) from Encephalitozoon cuniculi (strain GB-M1) (Microsporidian parasite).